The following is a 568-amino-acid chain: PWWP domain-containing protein2 (568 aa).

Positions 1-19 are enriched in basic and acidic residues; the sequence is MTEIKDSSVKDENPGKQEE. 3 disordered regions span residues 1–126, 213–340, and 465–568; these read MTEI…YKPG, QSTP…DVAK, and IASL…TGQK. Residues 29–46 are compositionally biased toward polar residues; sequence MSTATNNSKNIETTSSNG. 2 stretches are compositionally biased toward basic and acidic residues: residues 48 to 88 and 100 to 122; these read EDIK…KTIE and KSQK…ERVN. One can recognise a PWWP domain in the interval 125–189; sequence PGMRVLTKMS…SDSLTPLTSE (65 aa). Residues 214–228 are compositionally biased toward low complexity; that stretch reads STPDLDSLSVPSSES. Residues 229–249 are compositionally biased toward acidic residues; the sequence is EVSEEESDQEMSEPSPIEEDY. The span at 255-266 shows a compositional bias: basic residues; that stretch reads RRITRKGTKKKT. Over residues 281-292 the composition is skewed to polar residues; that stretch reads LNASSNVSSNPA. A compositionally biased stretch (acidic residues) spans 325-336; it reads KEEEEGSVANEE. Composition is skewed to basic and acidic residues over residues 489–500 and 514–541; these read KQNEDNEDKVKA and DASK…KDFA.

In Schizosaccharomyces pombe (strain 972 / ATCC 24843) (Fission yeast), this protein is PWWP domain-containing protein2 (pdp2).